A 502-amino-acid chain; its full sequence is Probable cytosol aminopeptidase 2 (502 aa).

Positions 269 and 274 each coordinate Mn(2+). Lysine 281 is a catalytic residue. Mn(2+) contacts are provided by aspartate 292, aspartate 351, and glutamate 353. The active site involves arginine 355.

The protein belongs to the peptidase M17 family. Mn(2+) serves as cofactor.

The protein resides in the cytoplasm. It carries out the reaction Release of an N-terminal amino acid, Xaa-|-Yaa-, in which Xaa is preferably Leu, but may be other amino acids including Pro although not Arg or Lys, and Yaa may be Pro. Amino acid amides and methyl esters are also readily hydrolyzed, but rates on arylamides are exceedingly low.. The enzyme catalyses Release of an N-terminal amino acid, preferentially leucine, but not glutamic or aspartic acids.. In terms of biological role, presumably involved in the processing and regular turnover of intracellular proteins. Catalyzes the removal of unsubstituted N-terminal amino acids from various peptides. This is Probable cytosol aminopeptidase 2 (pepA2) from Shewanella oneidensis (strain ATCC 700550 / JCM 31522 / CIP 106686 / LMG 19005 / NCIMB 14063 / MR-1).